The sequence spans 34 residues: Photosystem II reaction center protein M (34 aa).

A helical membrane pass occupies residues 7–27 (GFIATILFVLVPTVFLLILYI).

The protein belongs to the PsbM family. In terms of assembly, PSII is composed of 1 copy each of membrane proteins PsbA, PsbB, PsbC, PsbD, PsbE, PsbF, PsbH, PsbI, PsbJ, PsbK, PsbL, PsbM, PsbT, PsbX, PsbY, PsbZ, Psb30/Ycf12, peripheral proteins PsbO, CyanoQ (PsbQ), PsbU, PsbV and a large number of cofactors. It forms dimeric complexes.

It localises to the cellular thylakoid membrane. One of the components of the core complex of photosystem II (PSII). PSII is a light-driven water:plastoquinone oxidoreductase that uses light energy to abstract electrons from H(2)O, generating O(2) and a proton gradient subsequently used for ATP formation. It consists of a core antenna complex that captures photons, and an electron transfer chain that converts photonic excitation into a charge separation. This subunit is found at the monomer-monomer interface. The sequence is that of Photosystem II reaction center protein M from Picosynechococcus sp. (strain ATCC 27264 / PCC 7002 / PR-6) (Agmenellum quadruplicatum).